The primary structure comprises 515 residues: 2-isopropylmalate synthase (515 aa).

In terms of domain architecture, Pyruvate carboxyltransferase spans 5 to 267 (VIIFDTTLRD…DTHINTQEIH (263 aa)). Positions 14, 202, 204, and 238 each coordinate Mn(2+). The tract at residues 392-515 (VLDKLSAHST…VADIKNHKHH (124 aa)) is regulatory domain.

The protein belongs to the alpha-IPM synthase/homocitrate synthase family. LeuA type 1 subfamily. In terms of assembly, homodimer. Mn(2+) serves as cofactor.

It localises to the cytoplasm. It carries out the reaction 3-methyl-2-oxobutanoate + acetyl-CoA + H2O = (2S)-2-isopropylmalate + CoA + H(+). Its pathway is amino-acid biosynthesis; L-leucine biosynthesis; L-leucine from 3-methyl-2-oxobutanoate: step 1/4. Functionally, catalyzes the condensation of the acetyl group of acetyl-CoA with 3-methyl-2-oxobutanoate (2-ketoisovalerate) to form 3-carboxy-3-hydroxy-4-methylpentanoate (2-isopropylmalate). The sequence is that of 2-isopropylmalate synthase from Haemophilus influenzae (strain ATCC 51907 / DSM 11121 / KW20 / Rd).